The chain runs to 214 residues: Orotate phosphoribosyltransferase (214 aa).

Lys-26 provides a ligand contact to 5-phospho-alpha-D-ribose 1-diphosphate. 34–35 (FF) is an orotate binding site. 5-phospho-alpha-D-ribose 1-diphosphate contacts are provided by residues 72–73 (YK), Arg-99, Lys-100, Lys-103, His-105, and 124–132 (DDVITAGTA). Positions 128 and 156 each coordinate orotate.

Belongs to the purine/pyrimidine phosphoribosyltransferase family. PyrE subfamily. In terms of assembly, homodimer. It depends on Mg(2+) as a cofactor.

The enzyme catalyses orotidine 5'-phosphate + diphosphate = orotate + 5-phospho-alpha-D-ribose 1-diphosphate. The protein operates within pyrimidine metabolism; UMP biosynthesis via de novo pathway; UMP from orotate: step 1/2. Functionally, catalyzes the transfer of a ribosyl phosphate group from 5-phosphoribose 1-diphosphate to orotate, leading to the formation of orotidine monophosphate (OMP). This chain is Orotate phosphoribosyltransferase, found in Mannheimia succiniciproducens (strain KCTC 0769BP / MBEL55E).